A 293-amino-acid polypeptide reads, in one-letter code: Elongation factor Ts (293 aa).

The interval 79-82 is involved in Mg(2+) ion dislocation from EF-Tu; sequence TDFV. Serine 149 carries the phosphoserine modification.

This sequence belongs to the EF-Ts family.

It localises to the cytoplasm. In terms of biological role, associates with the EF-Tu.GDP complex and induces the exchange of GDP to GTP. It remains bound to the aminoacyl-tRNA.EF-Tu.GTP complex up to the GTP hydrolysis stage on the ribosome. The protein is Elongation factor Ts (tsf) of Bacillus subtilis (strain 168).